Consider the following 881-residue polypeptide: Alanine--tRNA ligase (881 aa).

Residues H565, H569, C672, and H676 each coordinate Zn(2+).

Belongs to the class-II aminoacyl-tRNA synthetase family. It depends on Zn(2+) as a cofactor.

It localises to the cytoplasm. The catalysed reaction is tRNA(Ala) + L-alanine + ATP = L-alanyl-tRNA(Ala) + AMP + diphosphate. Functionally, catalyzes the attachment of alanine to tRNA(Ala) in a two-step reaction: alanine is first activated by ATP to form Ala-AMP and then transferred to the acceptor end of tRNA(Ala). Also edits incorrectly charged Ser-tRNA(Ala) and Gly-tRNA(Ala) via its editing domain. In Novosphingobium aromaticivorans (strain ATCC 700278 / DSM 12444 / CCUG 56034 / CIP 105152 / NBRC 16084 / F199), this protein is Alanine--tRNA ligase.